Consider the following 191-residue polypeptide: Classical arabinogalactan protein 9 (191 aa).

An N-terminal signal peptide occupies residues 1–20 (MARSFAIAVICIVLIAGVTG). The segment at 20-172 (GQAPTSPPTA…SPTDVNDQNG (153 aa)) is disordered. Q21 is subject to Pyrrolidone carboxylic acid. 4-hydroxyproline is present on residues P23, P26, P27, P31, and P33. Pro residues predominate over residues 24–146 (TSPPTATPAP…PSPSSSPPLP (123 aa)). Residues P26, P27, P31, and P33 are each glycosylated (O-linked (Ara...) hydroxyproline). Polar residues predominate over residues 155 to 172 (TDSISPAPSPTDVNDQNG). The GPI-anchor amidated glycine moiety is linked to residue G172. A propeptide spans 173–191 (ASKMVSSLVFGSVLVWFMI) (removed in mature form).

It belongs to the classical AGP family. Post-translationally, O-glycosylated on hydroxyprolines; noncontiguous hydroxylproline residues are glycosylated with arabinogalactan. In terms of tissue distribution, predominantly expressed in flowers and at a lower level in leaves and siliques.

The protein resides in the cell membrane. In terms of biological role, proteoglycan that seems to be implicated in diverse developmental roles such as differentiation, cell-cell recognition, embryogenesis and programmed cell death. In Arabidopsis thaliana (Mouse-ear cress), this protein is Classical arabinogalactan protein 9 (AGP9).